A 116-amino-acid chain; its full sequence is Ribonuclease P protein component (116 aa).

The protein belongs to the RnpA family. In terms of assembly, consists of a catalytic RNA component (M1 or rnpB) and a protein subunit.

The enzyme catalyses Endonucleolytic cleavage of RNA, removing 5'-extranucleotides from tRNA precursor.. Its function is as follows. RNaseP catalyzes the removal of the 5'-leader sequence from pre-tRNA to produce the mature 5'-terminus. It can also cleave other RNA substrates such as 4.5S RNA. The protein component plays an auxiliary but essential role in vivo by binding to the 5'-leader sequence and broadening the substrate specificity of the ribozyme. In Caldanaerobacter subterraneus subsp. tengcongensis (strain DSM 15242 / JCM 11007 / NBRC 100824 / MB4) (Thermoanaerobacter tengcongensis), this protein is Ribonuclease P protein component.